The primary structure comprises 515 residues: Fatty acyl-CoA reductase 1 (515 aa).

Residues 1–465 are Cytoplasmic-facing; sequence MVSIPEYYEG…ARKHLNKLRN (465 aa). The interval 451-507 is necessary and sufficient for PEX19-mediated localization into peroxisome membrane; the sequence is SGLPAARKHLNKLRNIRYGFNTILVILIWRIFIARSQMARNIWYFVVSLCYKFLSYF. The helical transmembrane segment at 466–483 threads the bilayer; it reads IRYGFNTILVILIWRIFI. Residues 484–515 are Peroxisomal-facing; the sequence is ARSQMARNIWYFVVSLCYKFLSYFRASSTMRY.

Belongs to the fatty acyl-CoA reductase family. As to quaternary structure, interacts with PEX19; PEX19 mediates the targeting of FAR1 to peroxisomes.

The protein resides in the peroxisome membrane. It carries out the reaction a long-chain fatty acyl-CoA + 2 NADPH + 2 H(+) = a long-chain primary fatty alcohol + 2 NADP(+) + CoA. It catalyses the reaction hexadecanoyl-CoA + 2 NADPH + 2 H(+) = hexadecan-1-ol + 2 NADP(+) + CoA. The catalysed reaction is octadecanoyl-CoA + 2 NADPH + 2 H(+) = octadecan-1-ol + 2 NADP(+) + CoA. The enzyme catalyses eicosanoyl-CoA + 2 NADPH + 2 H(+) = eicosan-1-ol + 2 NADP(+) + CoA. It carries out the reaction (9Z)-octadecenoyl-CoA + 2 NADPH + 2 H(+) = (9Z)-octadecen-1-ol + 2 NADP(+) + CoA. It catalyses the reaction (9Z,12Z)-octadecadienoyl-CoA + 2 NADPH + 2 H(+) = (9Z,12Z)-octadecadien-1-ol + 2 NADP(+) + CoA. The catalysed reaction is 16-methylheptadecanoyl-CoA + 2 NADPH + 2 H(+) = 16-methylheptadecan-1-ol + 2 NADP(+) + CoA. The enzyme catalyses 18-methylnonadecanoyl-CoA + 2 NADPH + 2 H(+) = 18-methylnonadecan-1-ol + 2 NADP(+) + CoA. Functionally, catalyzes the reduction of saturated and unsaturated C16 or C18 fatty acyl-CoA to fatty alcohols. It plays an essential role in the production of ether lipids/plasmalogens which synthesis requires fatty alcohols. In parallel, it is also required for wax monoesters production since fatty alcohols also constitute a substrate for their synthesis. In Homo sapiens (Human), this protein is Fatty acyl-CoA reductase 1.